Reading from the N-terminus, the 475-residue chain is Putative aldehyde dehydrogenase (475 aa).

NAD(+)-binding positions include 146–147 (WN) and 223–224 (GS). The active-site Proton acceptor is E245. L246 is an NAD(+) binding site. Residue C279 is the Nucleophile of the active site. NAD(+) is bound at residue E379.

It belongs to the aldehyde dehydrogenase family.

The catalysed reaction is an aldehyde + NAD(+) + H2O = a carboxylate + NADH + 2 H(+). This is Putative aldehyde dehydrogenase from Staphylococcus aureus (strain bovine RF122 / ET3-1).